A 149-amino-acid polypeptide reads, in one-letter code: Transcriptional repressor NrdR (149 aa).

Residues 3-34 (CPFCSATDTKVIDSRLVAEGHQVRRRRECTEC) fold into a zinc finger. Residues 49 to 139 (PRVIKRDGSR…VYRAFEDVSE (91 aa)) enclose the ATP-cone domain.

This sequence belongs to the NrdR family. Zn(2+) serves as cofactor.

Its function is as follows. Negatively regulates transcription of bacterial ribonucleotide reductase nrd genes and operons by binding to NrdR-boxes. This chain is Transcriptional repressor NrdR, found in Shewanella putrefaciens (strain CN-32 / ATCC BAA-453).